The chain runs to 476 residues: Probable isoprenylcysteine alpha-carbonyl methylesterase ICMEL1 (476 aa).

The span at 92 to 104 (NCLSAFSDDTNGT) shows a compositional bias: polar residues. The tract at residues 92–116 (NCLSAFSDDTNGTADGGNNSGDRQT) is disordered. The next 2 membrane-spanning stretches (helical) occupy residues 153–173 (FMAL…VGYY) and 208–228 (VVAF…GSLL). Substrate-binding positions include 214–216 (GGA) and 285–287 (QSA). Catalysis depends on residues S286, D388, and H420.

The protein belongs to the AB hydrolase superfamily. Isoprenylcysteine methylesterase family. As to expression, expressed in roots, rosette and cauline leaves, stems, flowers and siliques.

Its subcellular location is the endoplasmic reticulum membrane. It localises to the golgi apparatus membrane. It catalyses the reaction [protein]-C-terminal S-[(2E,6E)-farnesyl]-L-cysteine methyl ester + H2O = [protein]-C-terminal S-[(2E,6E)-farnesyl]-L-cysteine + methanol + H(+). In terms of biological role, catalyzes the demethylation of isoprenylcysteine methylesters. May be involved in the regulation of ABA signaling. This chain is Probable isoprenylcysteine alpha-carbonyl methylesterase ICMEL1, found in Arabidopsis thaliana (Mouse-ear cress).